Here is a 644-residue protein sequence, read N- to C-terminus: Chaperone protein DnaK (644 aa).

T195 bears the Phosphothreonine; by autocatalysis mark. The disordered stretch occupies residues 598–644 (KQAAPGAGAPGAGPGPEAAGGAQQAQAEPKKDEGVIDAEYVDVDEKK). The span at 612 to 624 (GPEAAGGAQQAQA) shows a compositional bias: low complexity. Residues 632 to 644 (VIDAEYVDVDEKK) are compositionally biased toward acidic residues.

This sequence belongs to the heat shock protein 70 family.

Acts as a chaperone. This Koribacter versatilis (strain Ellin345) protein is Chaperone protein DnaK.